Consider the following 109-residue polypeptide: Small ribosomal subunit protein bS6 (109 aa).

Belongs to the bacterial ribosomal protein bS6 family.

Binds together with bS18 to 16S ribosomal RNA. The chain is Small ribosomal subunit protein bS6 from Dehalococcoides mccartyi (strain CBDB1).